The chain runs to 413 residues: MSRRKQTNPNKVHWDQVFAGLEEQARQAMMKTDFPGDLGSQRQAIQQLRDQDSSSSDSEGDEEETTQDEVSSHTSEEDGGVVKVEKELETAEAPVSSGDALAEREVTENLNSDPLLQLCQCPLCQLDCGSREQLIAHVYQHTAAVVSAKSYMCPVCGRALSSPGSLGRHLLIHSEDQRSNCAVCGARFTSHATFNSEKLPQVLNMESVPQVHSEGPSSAEGKDIACSPPVYPAGILLVCNNCAAYRKLLETQTPSVRKWALRRQNEPLEVRLQRLERERTAKKSRRDNETPEEREVRRMRDREAKRLQRMQETDEQRARRLQRDREAMRLKRANETPEKRQARLIREREAKRLKRRLEKMDMMLRAQFGQDPSAMAALAAEMNFFQLPVSGVELDSQLLGKMAFEEQNNSSLH.

Residues 26–83 (RQAMMKTDFPGDLGSQRQAIQQLRDQDSSSSDSEGDEEETTQDEVSSHTSEEDGGVVK) form a disordered region. Acidic residues predominate over residues 58–67 (SEGDEEETTQ). 2 C2H2-type zinc fingers span residues 117 to 141 (QLCQ…VYQH) and 151 to 173 (YMCP…LLIH). Residues 260–367 (ALRRQNEPLE…EKMDMMLRAQ (108 aa)) adopt a coiled-coil conformation. The segment at 279–320 (RTAKKSRRDNETPEEREVRRMRDREAKRLQRMQETDEQRARR) is disordered.

The protein belongs to the krueppel C2H2-type zinc-finger protein family.

The protein localises to the nucleus. Its function is as follows. May be involved in transcriptional regulation. This is Zinc finger protein 821 (Znf821) from Mus musculus (Mouse).